A 535-amino-acid polypeptide reads, in one-letter code: Phosphoenolpyruvate carboxykinase (ATP) (535 aa).

The substrate site is built by Arg59, Tyr201, and Lys207. ATP contacts are provided by residues Lys207, His226, and 243-251 (GLSGTGKTT). Mn(2+)-binding residues include Lys207 and His226. Mn(2+) is bound at residue Asp264. Residues Glu292, Arg328, 444-445 (RI), and Thr450 contribute to the ATP site. Arg328 is a binding site for substrate.

It belongs to the phosphoenolpyruvate carboxykinase (ATP) family. The cofactor is Mn(2+).

The protein resides in the cytoplasm. The enzyme catalyses oxaloacetate + ATP = phosphoenolpyruvate + ADP + CO2. It functions in the pathway carbohydrate biosynthesis; gluconeogenesis. In terms of biological role, involved in the gluconeogenesis. Catalyzes the conversion of oxaloacetate (OAA) to phosphoenolpyruvate (PEP) through direct phosphoryl transfer between the nucleoside triphosphate and OAA. This is Phosphoenolpyruvate carboxykinase (ATP) from Porphyromonas gingivalis (strain ATCC BAA-308 / W83).